Here is a 615-residue protein sequence, read N- to C-terminus: DNA mismatch repair protein MutL (615 aa).

Residues 362 to 397 (HFAEPAVREPVAPRYTPAPASGSRPAAPWPNAQPGY) are disordered. A compositionally biased stretch (low complexity) spans 378-391 (PAPASGSRPAAPWP).

It belongs to the DNA mismatch repair MutL/HexB family.

Functionally, this protein is involved in the repair of mismatches in DNA. It is required for dam-dependent methyl-directed DNA mismatch repair. May act as a 'molecular matchmaker', a protein that promotes the formation of a stable complex between two or more DNA-binding proteins in an ATP-dependent manner without itself being part of a final effector complex. The polypeptide is DNA mismatch repair protein MutL (Escherichia coli O17:K52:H18 (strain UMN026 / ExPEC)).